We begin with the raw amino-acid sequence, 201 residues long: Cutinase (201 aa).

A signal peptide spans 1–20; that stretch reads MKTSAQQLLSLLLLPLSAIA. C31 and C105 are joined by a disulfide. Residue S116 is the Nucleophile of the active site. A disulfide bridge links C164 with C171. D168 is an active-site residue. The active-site Proton donor/acceptor is the H181.

This sequence belongs to the cutinase family. The 2 disulfide bonds play a critical role in holding the catalytic residues in juxta-position; reduction of the disulfide bridges results in the complete inactivation of the enzyme.

Its subcellular location is the secreted. It carries out the reaction cutin + H2O = cutin monomers.. Its function is as follows. Catalyzes the hydrolysis of complex carboxylic polyesters found in the cell wall of plants. Degrades cutin, a macromolecule that forms the structure of the plant cuticle. Allows pathogenic fungi to penetrate through the cuticular barrier into the host plant during the initial stage of fungal infection. This is Cutinase (CUT1) from Monilinia fructicola (Brown rot fungus).